A 298-amino-acid polypeptide reads, in one-letter code: GTPase Era (298 aa).

Residues 4–171 form the Era-type G domain; it reads RAGFVALIGR…KEKIVSFLPE (168 aa). Residues 12 to 19 form a G1 region; that stretch reads GRTNVGKS. Residue 12-19 coordinates GTP; that stretch reads GRTNVGKS. Positions 38–42 are G2; the sequence is QTTRN. Positions 59–62 are G3; sequence DTPG. GTP is bound by residues 59–63 and 121–124; these read DTPGI and NKID. Residues 121 to 124 are G4; the sequence is NKID. The segment at 150–152 is G5; sequence ISA. The KH type-2 domain maps to 202–280; that stretch reads LEEEVPHGVY…FLQLWVKVRK (79 aa).

The protein belongs to the TRAFAC class TrmE-Era-EngA-EngB-Septin-like GTPase superfamily. Era GTPase family. As to quaternary structure, monomer.

It is found in the cytoplasm. Its subcellular location is the cell membrane. Its function is as follows. An essential GTPase that binds both GDP and GTP, with rapid nucleotide exchange. Plays a role in 16S rRNA processing and 30S ribosomal subunit biogenesis and possibly also in cell cycle regulation and energy metabolism. This Caldanaerobacter subterraneus subsp. tengcongensis (strain DSM 15242 / JCM 11007 / NBRC 100824 / MB4) (Thermoanaerobacter tengcongensis) protein is GTPase Era.